Reading from the N-terminus, the 374-residue chain is UDP-N-acetylglucosamine--N-acetylmuramyl-(pentapeptide) pyrophosphoryl-undecaprenol N-acetylglucosamine transferase (374 aa).

UDP-N-acetyl-alpha-D-glucosamine-binding positions include 13–15 (TGG), Asn-124, Arg-165, Ser-193, and Gln-294.

The protein belongs to the glycosyltransferase 28 family. MurG subfamily.

The protein resides in the cell inner membrane. It catalyses the reaction di-trans,octa-cis-undecaprenyl diphospho-N-acetyl-alpha-D-muramoyl-L-alanyl-D-glutamyl-meso-2,6-diaminopimeloyl-D-alanyl-D-alanine + UDP-N-acetyl-alpha-D-glucosamine = di-trans,octa-cis-undecaprenyl diphospho-[N-acetyl-alpha-D-glucosaminyl-(1-&gt;4)]-N-acetyl-alpha-D-muramoyl-L-alanyl-D-glutamyl-meso-2,6-diaminopimeloyl-D-alanyl-D-alanine + UDP + H(+). It participates in cell wall biogenesis; peptidoglycan biosynthesis. Cell wall formation. Catalyzes the transfer of a GlcNAc subunit on undecaprenyl-pyrophosphoryl-MurNAc-pentapeptide (lipid intermediate I) to form undecaprenyl-pyrophosphoryl-MurNAc-(pentapeptide)GlcNAc (lipid intermediate II). This is UDP-N-acetylglucosamine--N-acetylmuramyl-(pentapeptide) pyrophosphoryl-undecaprenol N-acetylglucosamine transferase from Rhizobium etli (strain CIAT 652).